Here is a 179-residue protein sequence, read N- to C-terminus: Small ribosomal subunit protein uS7 (179 aa).

It belongs to the universal ribosomal protein uS7 family. In terms of assembly, part of the 30S ribosomal subunit. Contacts proteins S9 and S11.

One of the primary rRNA binding proteins, it binds directly to 16S rRNA where it nucleates assembly of the head domain of the 30S subunit. Is located at the subunit interface close to the decoding center, probably blocks exit of the E-site tRNA. This Shigella flexneri serotype 5b (strain 8401) protein is Small ribosomal subunit protein uS7.